We begin with the raw amino-acid sequence, 683 residues long: MPALSPAKKGTDKGKTGKKTGKQEQNAQDYIPPPPPMPGDEAFAMPIREIVKPDNQLWLSEADLNEEVAKMLTANNPAAPKNIVRFNMKDKVFKLEPMVEQTVVHYATDGWLLHKSSDEAKRQMDMEKMEQEASARFQADIDRASHEHKDHGDVEPPDDSRQLRNQFNFSERAAQTLNYPLRDRETFTEPPPTATVSGACTQWEIYDEYIKDLERQRIDEAMKSKGGKKAAAAARAAGAAHRQRNEHVPTLQSPTLMHSLGTLDRMVNQNMYEEVAMDFKYWDDASDAFRPGEGSLLPLWRFVSDKSKRRQVTSVCWNPLYDDMFAVGYGSYEFLKQASGLINIYSLKNPSHPEYTFHTESGVMCVHFHPEFANLLAVGCYDGSVLVYDVRLKKDEPIYQASVRTGKLNDPVWQIYWQPDDAQKSLQFVSISSDGAVNLWTLTKSELIPECLMKLRVVRAGETREEEDPNASGAAGGCCMDFCKMPGQESIYLVGTEEGAIHRCSKAYSSQYLSTYVSHHLAVYAVHWNNIHPSMFLSASCRLDHQAVGLCHDPKRAVMNFDLNDSIGDVSWAALQPTVFAAVTDDGRVHVFDLAQNKLLPLCSQKVVKKAKLTKLVFNPKHPIVLVGDDKGCVTSLKLSPNLRITSKPEKGQKFEDLEVAKLDGVVEIARKSDADLAKNAAH.

The segment at 1–42 (MPALSPAKKGTDKGKTGKKTGKQEQNAQDYIPPPPPMPGDEA) is disordered. 4 WD repeats span residues 358 to 398 (HTES…DEPI), 407 to 450 (KLND…LIPE), 562 to 602 (DLND…LLPL), and 608 to 647 (VKKA…RITS).

This sequence belongs to the dynein intermediate chain family. In terms of assembly, consists of at least 3 heavy chains (alpha, beta and gamma), 2 intermediate chains and 8 light chains.

It localises to the cytoplasm. The protein localises to the cytoskeleton. Its subcellular location is the flagellum axoneme. In terms of biological role, is essential for arm assembly or attachment to the outer doublet microtubule. The protein is Dynein, 78 kDa intermediate chain, flagellar outer arm (ODA9) of Chlamydomonas reinhardtii (Chlamydomonas smithii).